Here is a 280-residue protein sequence, read N- to C-terminus: 3-methyl-2-oxobutanoate hydroxymethyltransferase (280 aa).

D61 and D100 together coordinate Mg(2+). 3-methyl-2-oxobutanoate contacts are provided by residues 61 to 62 (DS), D100, and K130. E132 is a binding site for Mg(2+). The Proton acceptor role is filled by E198.

It belongs to the PanB family. As to quaternary structure, homodecamer; pentamer of dimers. Requires Mg(2+) as cofactor.

The protein localises to the cytoplasm. The enzyme catalyses 3-methyl-2-oxobutanoate + (6R)-5,10-methylene-5,6,7,8-tetrahydrofolate + H2O = 2-dehydropantoate + (6S)-5,6,7,8-tetrahydrofolate. The protein operates within cofactor biosynthesis; (R)-pantothenate biosynthesis; (R)-pantoate from 3-methyl-2-oxobutanoate: step 1/2. Functionally, catalyzes the reversible reaction in which hydroxymethyl group from 5,10-methylenetetrahydrofolate is transferred onto alpha-ketoisovalerate to form ketopantoate. The protein is 3-methyl-2-oxobutanoate hydroxymethyltransferase of Mycolicibacterium vanbaalenii (strain DSM 7251 / JCM 13017 / BCRC 16820 / KCTC 9966 / NRRL B-24157 / PYR-1) (Mycobacterium vanbaalenii).